The sequence spans 329 residues: L-carnitine dehydrogenase (329 aa).

19 to 24 is an NAD(+) binding site; the sequence is GAGVIG.

This sequence belongs to the 3-hydroxyacyl-CoA dehydrogenase family. L-carnitine dehydrogenase subfamily. In terms of assembly, homodimer.

The protein resides in the cytoplasm. It catalyses the reaction carnitine + NAD(+) = 3-dehydrocarnitine + NADH + H(+). The protein operates within amine and polyamine metabolism; carnitine metabolism. Its function is as follows. Catalyzes the NAD(+)-dependent oxidation of L-carnitine to 3-dehydrocarnitine. In Nocardiopsis dassonvillei (strain ATCC 23218 / DSM 43111 / CIP 107115 / JCM 7437 / KCTC 9190 / NBRC 14626 / NCTC 10488 / NRRL B-5397 / IMRU 509) (Actinomadura dassonvillei), this protein is L-carnitine dehydrogenase.